Reading from the N-terminus, the 483-residue chain is ATP-dependent RNA helicase DDX25 (483 aa).

The short motif at 97–125 (KSFEELHLKNELLRGIYAMGFNRPSKIQE) is the Q motif element. Positions 130 to 300 (MMLADPPQNL…ERIVPDPNII (171 aa)) constitute a Helicase ATP-binding domain. An ATP-binding site is contributed by 143–150 (SQSGTGKT). A DEAD box motif is present at residues 247–250 (DEAD). Residues 311 to 478 (NIQQFYDQCE…KLNSMDMDEM (168 aa)) enclose the Helicase C-terminal domain.

It belongs to the DEAD box helicase family. An mRNA component of germ plasm. Localizes to the granulo-fibrillar material (GFM) of the mitochondrial cloud in stage I oocytes. Associated, at a low level, with the periphery of mature germinal granules in later stage oocytes. Localizes to the vegetal cortex in stage II oocytes and segregates with germ plasm during early embryogenesis. In adults, expression is restricted to the ovary and, at a lower level, to spermatogonia, spermatocytes and spermatids of the testis.

The protein resides in the cytoplasm. The protein localises to the nucleus. It carries out the reaction ATP + H2O = ADP + phosphate + H(+). ATP-dependent RNA helicase. This is ATP-dependent RNA helicase DDX25 from Xenopus laevis (African clawed frog).